Here is a 335-residue protein sequence, read N- to C-terminus: NADH-quinone oxidoreductase subunit H (335 aa).

Transmembrane regions (helical) follow at residues 12–32, 81–101, 114–134, 154–174, 187–207, 238–258, 270–290, and 307–327; these read IIAV…GALL, VIFT…FAVI, IGLL…LFAG, VSYE…VGSF, LWFI…GVAV, FFVG…TLFF, SLAF…FILL, and WKFC…IVLL.

It belongs to the complex I subunit 1 family. In terms of assembly, NDH-1 is composed of 13 different subunits. Subunits NuoA, H, J, K, L, M, N constitute the membrane sector of the complex.

The protein resides in the cell inner membrane. It carries out the reaction a quinone + NADH + 5 H(+)(in) = a quinol + NAD(+) + 4 H(+)(out). In terms of biological role, NDH-1 shuttles electrons from NADH, via FMN and iron-sulfur (Fe-S) centers, to quinones in the respiratory chain. The immediate electron acceptor for the enzyme in this species is believed to be ubiquinone. Couples the redox reaction to proton translocation (for every two electrons transferred, four hydrogen ions are translocated across the cytoplasmic membrane), and thus conserves the redox energy in a proton gradient. This subunit may bind ubiquinone. The polypeptide is NADH-quinone oxidoreductase subunit H (Pseudomonas syringae pv. tomato (strain ATCC BAA-871 / DC3000)).